The chain runs to 51 residues: Small, acid-soluble spore protein K (51 aa).

Residues 1–51 are disordered; that stretch reads MRNKAKGFPNPISFNGNKANNADEHASKRPDGTTRDRPQERMRSSNHFNSL. Basic and acidic residues predominate over residues 21-43; sequence NADEHASKRPDGTTRDRPQERMR.

The protein belongs to the SspK family.

The protein resides in the spore core. In Shouchella clausii (strain KSM-K16) (Alkalihalobacillus clausii), this protein is Small, acid-soluble spore protein K.